The chain runs to 638 residues: MDLVELDYLSALEDLTFNSKPIIHTLTYIAQENEPYAISIVNAIEKHIQKCPPNCKLPALYLLDSISKNLGAPYTYFFGLHLFSTFMSAYTVVEPRLRLKLDQLLATWKQRPPNSSSLEPVFSPIVTAKIENALLKYKSTILRHQSPLLANTSISSFSAPIDANINSYSSFSDPASSYKPSLPSVPFGFQHISGTSPSPGFITLDSLLSDVNRMIVTEQARFIKNPYDNMAKKRFEILLQLKNVLSSSALPYDQLLAIKNQLAQLEKPASPSTSSVATSAPSVPSALSSISSTPFMKPSIPSTIPTIPSAYSASVSSQPPLTHSYVHPGPQSHKYSLSSGPPASLYNANALTPEESSSIDSLFANLQAAGLVPPSAGGKSQGPQASCTEAVSLTADIDLSKSSLATPRPKLSSLLYENYSNQCANCGRRYGNDPESRKELDKHSDWHFRINKRIRESSLHGINRCWFVMEEEWVNSKEEEDLITETAQEIEEQRQKQMESVRSQYVLTPLDPIAASEPCPICQEKFQSVWHEEAEVWVFMNAVEEEGRIFHATCLQEVRPSENKHSNTNTSTQNLAEAAVSSNIKNATGDASKDSQPDVQNLLQGIDIQSILQALGKRKERDDSMDSMSSKVIKQESK.

One can recognise a CID domain in the interval methionine 1 to lysine 138. 2 disordered regions span residues glutamine 318–serine 338 and leucine 615–lysine 638.

This is an uncharacterized protein from Schizosaccharomyces pombe (strain 972 / ATCC 24843) (Fission yeast).